The chain runs to 647 residues: Calmodulin-binding protein 60 B (647 aa).

Over residues 1–10 (MMDSGNNNMN) the composition is skewed to polar residues. Positions 1–26 (MMDSGNNNMNRAKRNLDGNDDDQPER) are disordered. The calmodulin-binding stretch occupies residues 8 to 85 (NMNRAKRNLD…TGSSGSSPKR (78 aa)). The Nuclear localization signal motif lies at 12 to 19 (AKRNLDGN). The segment at 155 to 278 (EDDEDWTQEE…AFHKKLTAEG (124 aa)) is DNA-binding.

The protein belongs to the plant ACBP60 protein family. In terms of assembly, interacts with calmodulin (CaM). In terms of tissue distribution, expressed in leaves, stems, flowers, developing seeds and root.

It is found in the nucleus. In terms of biological role, transcription activator that binds DNA in a sequence-specific manner, likely 5'-GAAATTTTGG-3', to promote the expression of target genes. The protein is Calmodulin-binding protein 60 B of Arabidopsis thaliana (Mouse-ear cress).